Here is a 301-residue protein sequence, read N- to C-terminus: NAD kinase (301 aa).

The active-site Proton acceptor is Asp-73. Residues Asp-73–Gly-74, Asn-160–Glu-161, Arg-188, Asp-190, Ala-198, Thr-201–Ser-206, Ala-225, and Gln-257 each bind NAD(+).

Belongs to the NAD kinase family. It depends on a divalent metal cation as a cofactor.

It is found in the cytoplasm. It carries out the reaction NAD(+) + ATP = ADP + NADP(+) + H(+). Involved in the regulation of the intracellular balance of NAD and NADP, and is a key enzyme in the biosynthesis of NADP. Catalyzes specifically the phosphorylation on 2'-hydroxyl of the adenosine moiety of NAD to yield NADP. In Helicobacter hepaticus (strain ATCC 51449 / 3B1), this protein is NAD kinase.